The primary structure comprises 275 residues: 4-hydroxy-3-methylbut-2-enyl diphosphate reductase (275 aa).

Cysteine 12 provides a ligand contact to [4Fe-4S] cluster. (2E)-4-hydroxy-3-methylbut-2-enyl diphosphate is bound by residues histidine 36 and histidine 70. Histidine 36 and histidine 70 together coordinate dimethylallyl diphosphate. Isopentenyl diphosphate is bound by residues histidine 36 and histidine 70. Cysteine 92 is a [4Fe-4S] cluster binding site. Histidine 120 serves as a coordination point for (2E)-4-hydroxy-3-methylbut-2-enyl diphosphate. A dimethylallyl diphosphate-binding site is contributed by histidine 120. Histidine 120 contributes to the isopentenyl diphosphate binding site. Glutamate 122 functions as the Proton donor in the catalytic mechanism. Threonine 157 contributes to the (2E)-4-hydroxy-3-methylbut-2-enyl diphosphate binding site. Position 185 (cysteine 185) interacts with [4Fe-4S] cluster. Serine 213, serine 214, asparagine 215, and serine 257 together coordinate (2E)-4-hydroxy-3-methylbut-2-enyl diphosphate. Serine 213, serine 214, asparagine 215, and serine 257 together coordinate dimethylallyl diphosphate. Isopentenyl diphosphate-binding residues include serine 213, serine 214, asparagine 215, and serine 257.

This sequence belongs to the IspH family. [4Fe-4S] cluster is required as a cofactor.

The enzyme catalyses isopentenyl diphosphate + 2 oxidized [2Fe-2S]-[ferredoxin] + H2O = (2E)-4-hydroxy-3-methylbut-2-enyl diphosphate + 2 reduced [2Fe-2S]-[ferredoxin] + 2 H(+). It catalyses the reaction dimethylallyl diphosphate + 2 oxidized [2Fe-2S]-[ferredoxin] + H2O = (2E)-4-hydroxy-3-methylbut-2-enyl diphosphate + 2 reduced [2Fe-2S]-[ferredoxin] + 2 H(+). Its pathway is isoprenoid biosynthesis; dimethylallyl diphosphate biosynthesis; dimethylallyl diphosphate from (2E)-4-hydroxy-3-methylbutenyl diphosphate: step 1/1. It functions in the pathway isoprenoid biosynthesis; isopentenyl diphosphate biosynthesis via DXP pathway; isopentenyl diphosphate from 1-deoxy-D-xylulose 5-phosphate: step 6/6. Functionally, catalyzes the conversion of 1-hydroxy-2-methyl-2-(E)-butenyl 4-diphosphate (HMBPP) into a mixture of isopentenyl diphosphate (IPP) and dimethylallyl diphosphate (DMAPP). Acts in the terminal step of the DOXP/MEP pathway for isoprenoid precursor biosynthesis. This is 4-hydroxy-3-methylbut-2-enyl diphosphate reductase from Nitratiruptor sp. (strain SB155-2).